The sequence spans 481 residues: Cysteine--tRNA ligase (481 aa).

Cys29 is a binding site for Zn(2+). The 'HIGH' region signature appears at 31 to 41; the sequence is PTVYDYSHLGH. Residues Cys210, His235, and Glu239 each coordinate Zn(2+). The 'KMSKS' region motif lies at 272–276; sequence KMSKS. Lys275 lines the ATP pocket.

It belongs to the class-I aminoacyl-tRNA synthetase family. As to quaternary structure, monomer. Requires Zn(2+) as cofactor.

The protein localises to the cytoplasm. It carries out the reaction tRNA(Cys) + L-cysteine + ATP = L-cysteinyl-tRNA(Cys) + AMP + diphosphate. In Anaeromyxobacter dehalogenans (strain 2CP-C), this protein is Cysteine--tRNA ligase.